Reading from the N-terminus, the 645-residue chain is Crossover junction endonuclease mus-81 (645 aa).

2 disordered regions span residues 98-119 (LAAA…RTAR) and 219-310 (GVAG…EDRK). Over residues 223–252 (SANTSRNAIASGSGTSNPNRSENVNPNRQD) the composition is skewed to polar residues. Over residues 296 to 305 (DSDDEDPKYD) the composition is skewed to acidic residues. An ERCC4 domain is found at 353–459 (ELVLDTREVQ…NVVYIIENYN (107 aa)).

The protein belongs to the XPF family. Interacts with eme-1. It depends on Mg(2+) as a cofactor.

It is found in the nucleus. In terms of biological role, interacts with eme-1 to form a DNA structure-specific endonuclease with substrate preference for branched DNA structures with a 5'-end at the branch nick. Typical substrates include 3'-flap structures, D-loops, replication forks and nicked Holliday junctions. May be required in mitosis for the processing of stalled or collapsed replication fork intermediates. May be required in meiosis for the repair of meiosis-specific double strand breaks subsequent to single-end invasion (SEI). This Neurospora crassa (strain ATCC 24698 / 74-OR23-1A / CBS 708.71 / DSM 1257 / FGSC 987) protein is Crossover junction endonuclease mus-81 (mus-81).